Consider the following 293-residue polypeptide: 33 kDa chaperonin (293 aa).

Intrachain disulfides connect Cys-237/Cys-239 and Cys-271/Cys-274.

It belongs to the HSP33 family. Post-translationally, under oxidizing conditions two disulfide bonds are formed involving the reactive cysteines. Under reducing conditions zinc is bound to the reactive cysteines and the protein is inactive.

It is found in the cytoplasm. Functionally, redox regulated molecular chaperone. Protects both thermally unfolding and oxidatively damaged proteins from irreversible aggregation. Plays an important role in the bacterial defense system toward oxidative stress. The chain is 33 kDa chaperonin from Haemophilus influenzae (strain ATCC 51907 / DSM 11121 / KW20 / Rd).